The primary structure comprises 1148 residues: Transcription-repair-coupling factor (1148 aa).

A Helicase ATP-binding domain is found at 615–776 (DMCQPLAMDR…MSGMRDLSII (162 aa)). Residue 628-635 (GDVGFGKT) participates in ATP binding. A DEEH box motif is present at residues 729-732 (DEEH). Positions 798–951 (VREAILREIL…GFALATHDLE (154 aa)) constitute a Helicase C-terminal domain.

It in the N-terminal section; belongs to the UvrB family. The protein in the C-terminal section; belongs to the helicase family. RecG subfamily. As to quaternary structure, monomer. Interacts with UvrA and RNAP.

The protein resides in the cytoplasm. Functionally, couples transcription and DNA repair by recognizing RNA polymerase (RNAP) stalled at DNA lesions. Mediates ATP-dependent release of RNAP and its truncated transcript from the DNA, and recruitment of nucleotide excision repair machinery to the damaged site. Can also dissociate RNAP that is blocked by low concentration of nucleoside triphosphates or by physical obstruction, such as bound proteins. In addition, can rescue arrested complexes by promoting forward translocation. Has ATPase activity, which is required for removal of stalled RNAP, but seems to lack helicase activity. May act through a translocase activity that rewinds upstream DNA, leading either to translocation or to release of RNAP when the enzyme active site cannot continue elongation. This chain is Transcription-repair-coupling factor, found in Escherichia coli (strain K12).